The chain runs to 238 residues: Sugar fermentation stimulation protein homolog (238 aa).

It belongs to the SfsA family.

This chain is Sugar fermentation stimulation protein homolog, found in Alkalilimnicola ehrlichii (strain ATCC BAA-1101 / DSM 17681 / MLHE-1).